The primary structure comprises 556 residues: Polypeptide N-acetylgalactosaminyltransferase 13 (556 aa).

Residues 1–4 (MRRL) lie on the Cytoplasmic side of the membrane. A helical; Signal-anchor for type II membrane protein membrane pass occupies residues 5–27 (VYCKVVLATSLMWVLVDVFLLLY). Topologically, residues 28-556 (FSECNKCDDK…WLLRNMTLGT (529 aa)) are lumenal. Asparagine 94 and asparagine 116 each carry an N-linked (GlcNAc...) asparagine glycan. Cystine bridges form between cysteine 105/cysteine 338, cysteine 329/cysteine 407, cysteine 441/cysteine 458, cysteine 481/cysteine 496, and cysteine 522/cysteine 539. Positions 114–224 (LPNTSVVIVF…LGWLEPLLAR (111 aa)) are catalytic subdomain A. Substrate is bound by residues aspartate 155 and arginine 185. Mn(2+) is bound by residues aspartate 208 and histidine 210. The segment at 284–346 (PVRTPTMAGG…TCSHVGHVFR (63 aa)) is catalytic subdomain B. Tryptophan 315 is a substrate binding site. Histidine 343 provides a ligand contact to Mn(2+). Arginine 346 and tyrosine 351 together coordinate substrate. Positions 428–550 (YSLGEIRNVE…GSRSQQWLLR (123 aa)) constitute a Ricin B-type lectin domain. Asparagine 551 is a glycosylation site (N-linked (GlcNAc...) asparagine).

It belongs to the glycosyltransferase 2 family. GalNAc-T subfamily. It depends on Mn(2+) as a cofactor.

The protein localises to the golgi apparatus membrane. It carries out the reaction L-seryl-[protein] + UDP-N-acetyl-alpha-D-galactosamine = a 3-O-[N-acetyl-alpha-D-galactosaminyl]-L-seryl-[protein] + UDP + H(+). The enzyme catalyses L-threonyl-[protein] + UDP-N-acetyl-alpha-D-galactosamine = a 3-O-[N-acetyl-alpha-D-galactosaminyl]-L-threonyl-[protein] + UDP + H(+). It functions in the pathway protein modification; protein glycosylation. Its function is as follows. Catalyzes the initial reaction in O-linked oligosaccharide biosynthesis, the transfer of an N-acetyl-D-galactosamine (GalNAc) residue from UDP-GalNAc to a serine or threonine residue on the protein receptor. Generates GalNAc-O-Ser/Thr structure also known as Tn antigen, which itself is immunogenic but also serves as a precursor for the synthesis of different mucin-type O-glycan core structures. Contributes to the synthesis of O-linked glycans on mucins and proteoglycans of the central nervous system. Can glycosylate both unmodified peptides and glycopeptides that already contain an O-linked GalNAc sugar. Transfers GalNAc to Thr-/Ser-rich tandem repeats GTTPSPVPTTSTTSAP of MUC5AC. Transfers GalNAc to three consecutive serine/threonine residues on SDC3 forming a triplet-Tn epitope expressed in Purkinje cells of the developing brain. May promote neurogenesis through glycosylation and stabilization of PDPN. This is Polypeptide N-acetylgalactosaminyltransferase 13 (Galnt13) from Rattus norvegicus (Rat).